A 491-amino-acid chain; its full sequence is Probable cytosol aminopeptidase (491 aa).

Mn(2+)-binding residues include K263 and D268. K275 is a catalytic residue. Residues D286, D345, and E347 each contribute to the Mn(2+) site. The active site involves R349.

This sequence belongs to the peptidase M17 family. Mn(2+) serves as cofactor.

The protein resides in the cytoplasm. The catalysed reaction is Release of an N-terminal amino acid, Xaa-|-Yaa-, in which Xaa is preferably Leu, but may be other amino acids including Pro although not Arg or Lys, and Yaa may be Pro. Amino acid amides and methyl esters are also readily hydrolyzed, but rates on arylamides are exceedingly low.. The enzyme catalyses Release of an N-terminal amino acid, preferentially leucine, but not glutamic or aspartic acids.. Functionally, presumably involved in the processing and regular turnover of intracellular proteins. Catalyzes the removal of unsubstituted N-terminal amino acids from various peptides. This is Probable cytosol aminopeptidase from Haemophilus influenzae (strain PittEE).